Here is a 539-residue protein sequence, read N- to C-terminus: Cytochrome P450 monooxygenase pvhE (539 aa).

The helical transmembrane segment at 15-31 (VAFCSLVILCILFKVLT) threads the bilayer. Asn-379 is a glycosylation site (N-linked (GlcNAc...) asparagine). Cys-473 provides a ligand contact to heme.

The protein belongs to the cytochrome P450 family. Requires heme as cofactor.

It is found in the membrane. Its pathway is secondary metabolite biosynthesis. Its function is as follows. Cytochrome P450 monooxygenase; part of the gene cluster that mediates the biosynthesis of varicidin A, an antifungal natural product containing a cis-octahydrodecalin core. The PKS module of pvhA together with the enoylreductase pvhC catalyze the formation of the polyketide unit which is then conjugated to L-isoleucine by the condensation domain of the NRPS module. Activity of the Dieckmann cyclase domain (RED) of pvhA results in release of an acyclic tetramate. The cytochrome P450 monooxygenase pvhE then catalyzes the oxidation of the C21 methyl group to a to carboxylate group. The methyltransferase pvhD then further methylates the pvhE product. The Diels-Alderase pvhB is able to catalyze Diels-Alder cycloaddition using both pvhE and pvhD products as substrates to form the decalin ring, yielding varicidin B and A, respectively. This chain is Cytochrome P450 monooxygenase pvhE, found in Talaromyces variabilis (Penicillium variabile).